A 96-amino-acid polypeptide reads, in one-letter code: Co-chaperonin GroES (96 aa).

This sequence belongs to the GroES chaperonin family. As to quaternary structure, heptamer of 7 subunits arranged in a ring. Interacts with the chaperonin GroEL.

Its subcellular location is the cytoplasm. Its function is as follows. Together with the chaperonin GroEL, plays an essential role in assisting protein folding. The GroEL-GroES system forms a nano-cage that allows encapsulation of the non-native substrate proteins and provides a physical environment optimized to promote and accelerate protein folding. GroES binds to the apical surface of the GroEL ring, thereby capping the opening of the GroEL channel. The polypeptide is Co-chaperonin GroES (Alcanivorax borkumensis (strain ATCC 700651 / DSM 11573 / NCIMB 13689 / SK2)).